A 292-amino-acid polypeptide reads, in one-letter code: Ventral anterior homeobox 2 (292 aa).

Residues 1–36 are compositionally biased toward basic and acidic residues; it reads MGDGGAERDRGPKRREEPGGRSGCRGEHRGAEDLRA. The segment at 1–74 is disordered; the sequence is MGDGGAERDR…DGQQALGETD (74 aa). The segment covering 38–55 has biased composition (polar residues); sequence TGSTSPREIAGTSASSPA. The segment at residues 102 to 161 is a DNA-binding region (homeobox); sequence PKRTRTSFTAEQLYRLEMEFQRCQYVVGRERTELARQLNLSETQVKVWFQNRRTKQKKDQ. The interval 212–241 is disordered; the sequence is AGHRGTSLGDPRNSSQRLNPMPSASASSPL.

The protein belongs to the EMX homeobox family.

The protein resides in the nucleus. Transcription factor that may function in dorsoventral specification of the forebrain. Regulates the expression of Wnt signaling antagonists including the expression of a truncated TCF7L2 isoform that cannot bind CTNNB1 and acts therefore as a potent dominant-negative Wnt antagonist. Plays a crucial role in eye development and, in particular, in the specification of the ventral optic vesicle. May be a regulator of axial polarization in the retina. In Rattus norvegicus (Rat), this protein is Ventral anterior homeobox 2 (Vax2).